The primary structure comprises 172 residues: Bacilliredoxin SRU_0242 (172 aa).

Residues 141-172 (TDEAPPSDAPSRPDLSSSPNAGGLPSTFQSIS) are disordered. Over residues 154 to 172 (DLSSSPNAGGLPSTFQSIS) the composition is skewed to polar residues.

Belongs to the bacilliredoxin family.

The chain is Bacilliredoxin SRU_0242 from Salinibacter ruber (strain DSM 13855 / M31).